The primary structure comprises 165 residues: Deoxyuridine 5'-triphosphate nucleotidohydrolase (165 aa).

Substrate-binding positions include 66–68, N79, 83–85, and K93; these read RSG and TVD. Positions 134–165 are disordered; sequence ETSRGAGGHGSSGGHASLTPGARSAARVAQEG.

Belongs to the dUTPase family. The cofactor is Mg(2+).

The catalysed reaction is dUTP + H2O = dUMP + diphosphate + H(+). The protein operates within pyrimidine metabolism; dUMP biosynthesis; dUMP from dCTP (dUTP route): step 2/2. Its function is as follows. This enzyme is involved in nucleotide metabolism: it produces dUMP, the immediate precursor of thymidine nucleotides and it decreases the intracellular concentration of dUTP so that uracil cannot be incorporated into DNA. In Nocardia farcinica (strain IFM 10152), this protein is Deoxyuridine 5'-triphosphate nucleotidohydrolase.